Consider the following 112-residue polypeptide: UPF0251 protein MA_4245 (112 aa).

The protein belongs to the UPF0251 family.

This Methanosarcina acetivorans (strain ATCC 35395 / DSM 2834 / JCM 12185 / C2A) protein is UPF0251 protein MA_4245.